The sequence spans 93 residues: Protein S100-A5 (93 aa).

EF-hand domains lie at 12–47 and 48–83; these read MVTT…LAEK and MKES…LCMA. Ca(2+)-binding residues include T28, E33, D61, N63, D65, E67, and E72.

Belongs to the S-100 family. As to quaternary structure, homodimer.

In terms of biological role, binds calcium, zinc and copper. One subunit can simultaneously bind 2 calcium ions or 2 copper ions plus 1 zinc ion. Calcium and copper ions compete for the same binding sites. The polypeptide is Protein S100-A5 (S100a5) (Mus musculus (Mouse)).